The following is a 134-amino-acid chain: Profilin-2 (134 aa).

A disulfide bond links C13 and C118. The short motif at 84–100 (AVIRGKKGSGGITIKKT) is the Involved in PIP2 interaction element. T114 is modified (phosphothreonine).

This sequence belongs to the profilin family. Occurs in many kinds of cells as a complex with monomeric actin in a 1:1 ratio. Post-translationally, phosphorylated by MAP kinases.

The protein localises to the cytoplasm. Its subcellular location is the cytoskeleton. Functionally, binds to actin and affects the structure of the cytoskeleton. At high concentrations, profilin prevents the polymerization of actin, whereas it enhances it at low concentrations. The polypeptide is Profilin-2 (Olea europaea (Common olive)).